A 157-amino-acid chain; its full sequence is Transcription elongation factor GreA (157 aa).

Belongs to the GreA/GreB family.

In terms of biological role, necessary for efficient RNA polymerase transcription elongation past template-encoded arresting sites. The arresting sites in DNA have the property of trapping a certain fraction of elongating RNA polymerases that pass through, resulting in locked ternary complexes. Cleavage of the nascent transcript by cleavage factors such as GreA or GreB allows the resumption of elongation from the new 3'terminus. GreA releases sequences of 2 to 3 nucleotides. This is Transcription elongation factor GreA from Hyphomonas neptunium (strain ATCC 15444).